The sequence spans 94 residues: Co-chaperonin GroES (94 aa).

This sequence belongs to the GroES chaperonin family. Heptamer of 7 subunits arranged in a ring. Interacts with the chaperonin GroEL.

The protein resides in the cytoplasm. Its function is as follows. Together with the chaperonin GroEL, plays an essential role in assisting protein folding. The GroEL-GroES system forms a nano-cage that allows encapsulation of the non-native substrate proteins and provides a physical environment optimized to promote and accelerate protein folding. GroES binds to the apical surface of the GroEL ring, thereby capping the opening of the GroEL channel. This is Co-chaperonin GroES from Clostridioides difficile (strain 630) (Peptoclostridium difficile).